The chain runs to 249 residues: tRNA (guanine-N(1)-)-methyltransferase (249 aa).

S-adenosyl-L-methionine is bound by residues glycine 113 and 133–138 (IGDYVL).

It belongs to the RNA methyltransferase TrmD family. Homodimer.

It is found in the cytoplasm. It carries out the reaction guanosine(37) in tRNA + S-adenosyl-L-methionine = N(1)-methylguanosine(37) in tRNA + S-adenosyl-L-homocysteine + H(+). Its function is as follows. Specifically methylates guanosine-37 in various tRNAs. This chain is tRNA (guanine-N(1)-)-methyltransferase, found in Aeromonas salmonicida (strain A449).